Here is a 49-residue protein sequence, read N- to C-terminus: Large ribosomal subunit protein bL33B (49 aa).

This sequence belongs to the bacterial ribosomal protein bL33 family.

The sequence is that of Large ribosomal subunit protein bL33B from Staphylococcus saprophyticus subsp. saprophyticus (strain ATCC 15305 / DSM 20229 / NCIMB 8711 / NCTC 7292 / S-41).